The chain runs to 142 residues: Glia maturation factor beta (142 aa).

At serine 2 the chain carries N-acetylserine. Residues 4–139 (SLVVCDVAED…TEEWLREKLG (136 aa)) form the ADF-H domain.

This sequence belongs to the actin-binding proteins ADF family. GMF subfamily. Phosphorylated; stimulated by phorbol ester.

This protein causes differentiation of brain cells, stimulation of neural regeneration, and inhibition of proliferation of tumor cells. The polypeptide is Glia maturation factor beta (GMFB) (Homo sapiens (Human)).